Consider the following 419-residue polypeptide: Ribosome biogenesis protein NOP53 (419 aa).

Disordered stretches follow at residues 1-21 and 233-283; these read MGIK…KNKR and KAFE…KIRQ. Over residues 233–261 the composition is skewed to basic and acidic residues; the sequence is KAFEDKGLVSDQDVNHSIDSDDQSEHEQA. Phosphoserine is present on residues Ser242, Ser249, Ser252, and Ser256. The segment covering 269 to 283 has biased composition (basic residues); the sequence is KNKRKTRSQRNKIRQ.

Belongs to the NOP53 family.

It is found in the nucleus. Its subcellular location is the nucleolus. The protein localises to the nucleoplasm. Functionally, may play a role in ribosome biogenesis. This chain is Ribosome biogenesis protein NOP53, found in Schizosaccharomyces pombe (strain 972 / ATCC 24843) (Fission yeast).